Here is a 412-residue protein sequence, read N- to C-terminus: Argininosuccinate synthase (412 aa).

ATP is bound by residues 10–18 and A36; that span reads AYSGGLDTS. L-citrulline is bound by residues Y87 and S92. ATP is bound at residue 115–123; that stretch reads SHGATGKGN. L-aspartate is bound by residues T119, N123, and D124. N123 contacts L-citrulline. 5 residues coordinate L-citrulline: R127, S180, S189, E270, and Y282.

Belongs to the argininosuccinate synthase family. In terms of assembly, homotetramer.

It catalyses the reaction L-citrulline + L-aspartate + ATP = 2-(N(omega)-L-arginino)succinate + AMP + diphosphate + H(+). The protein operates within amino-acid biosynthesis; L-arginine biosynthesis; L-arginine from L-ornithine and carbamoyl phosphate: step 2/3. It participates in nitrogen metabolism; urea cycle; (N(omega)-L-arginino)succinate from L-aspartate and L-citrulline: step 1/1. The sequence is that of Argininosuccinate synthase from Aedes aegypti (Yellowfever mosquito).